Reading from the N-terminus, the 282-residue chain is Bifunctional protein FolD (282 aa).

NADP(+) contacts are provided by residues 165 to 167, Ser-190, and Thr-231; that span reads GRS.

The protein belongs to the tetrahydrofolate dehydrogenase/cyclohydrolase family. Homodimer.

The catalysed reaction is (6R)-5,10-methylene-5,6,7,8-tetrahydrofolate + NADP(+) = (6R)-5,10-methenyltetrahydrofolate + NADPH. It carries out the reaction (6R)-5,10-methenyltetrahydrofolate + H2O = (6R)-10-formyltetrahydrofolate + H(+). It functions in the pathway one-carbon metabolism; tetrahydrofolate interconversion. In terms of biological role, catalyzes the oxidation of 5,10-methylenetetrahydrofolate to 5,10-methenyltetrahydrofolate and then the hydrolysis of 5,10-methenyltetrahydrofolate to 10-formyltetrahydrofolate. This is Bifunctional protein FolD from Clostridium botulinum (strain Alaska E43 / Type E3).